The primary structure comprises 510 residues: Serine carboxypeptidase-like 48 (510 aa).

The N-terminal stretch at 1 to 25 (MDSKTTFLTFLLCIFIFSHFSPSTS) is a signal peptide. Disulfide bonds link cysteine 141–cysteine 383, cysteine 309–cysteine 326, and cysteine 349–cysteine 354. 2 N-linked (GlcNAc...) asparagine glycosylation sites follow: asparagine 158 and asparagine 159. Serine 231 is a catalytic residue. Active-site residues include aspartate 421 and histidine 478.

The protein belongs to the peptidase S10 family. In terms of tissue distribution, ubiquitous.

Its subcellular location is the secreted. Its function is as follows. Probable carboxypeptidase. The sequence is that of Serine carboxypeptidase-like 48 (SCPL48) from Arabidopsis thaliana (Mouse-ear cress).